Reading from the N-terminus, the 285-residue chain is Stress response regulator protein 1 (285 aa).

Low complexity-rich tracts occupy residues 43–58 (DTSSQNDSISTQSSNN) and 128–138 (SIISSKSSNKS). Disordered regions lie at residues 43 to 66 (DTSSQNDSISTQSSNNDDTHSDQQ) and 114 to 142 (PLTPFDDQTTSPQDSIISSKSSNKSTTVV). Positions 158-276 (SFLIVDDNII…LDFMANSIDD (119 aa)) constitute a Response regulatory domain. The residue at position 209 (Asp-209) is a 4-aspartylphosphate.

Required for stress adaptation, morphogenesis and virulence. The chain is Stress response regulator protein 1 (SRR1) from Candida dubliniensis (strain CD36 / ATCC MYA-646 / CBS 7987 / NCPF 3949 / NRRL Y-17841) (Yeast).